A 132-amino-acid chain; its full sequence is Small ribosomal subunit protein uS8 (132 aa).

Belongs to the universal ribosomal protein uS8 family. As to quaternary structure, part of the 30S ribosomal subunit. Contacts proteins S5 and S12.

One of the primary rRNA binding proteins, it binds directly to 16S rRNA central domain where it helps coordinate assembly of the platform of the 30S subunit. This Lacticaseibacillus casei (strain BL23) (Lactobacillus casei) protein is Small ribosomal subunit protein uS8.